The following is a 95-amino-acid chain: Aspartyl/glutamyl-tRNA(Asn/Gln) amidotransferase subunit C (95 aa).

Belongs to the GatC family. In terms of assembly, heterotrimer of A, B and C subunits.

It catalyses the reaction L-glutamyl-tRNA(Gln) + L-glutamine + ATP + H2O = L-glutaminyl-tRNA(Gln) + L-glutamate + ADP + phosphate + H(+). The enzyme catalyses L-aspartyl-tRNA(Asn) + L-glutamine + ATP + H2O = L-asparaginyl-tRNA(Asn) + L-glutamate + ADP + phosphate + 2 H(+). Functionally, allows the formation of correctly charged Asn-tRNA(Asn) or Gln-tRNA(Gln) through the transamidation of misacylated Asp-tRNA(Asn) or Glu-tRNA(Gln) in organisms which lack either or both of asparaginyl-tRNA or glutaminyl-tRNA synthetases. The reaction takes place in the presence of glutamine and ATP through an activated phospho-Asp-tRNA(Asn) or phospho-Glu-tRNA(Gln). The protein is Aspartyl/glutamyl-tRNA(Asn/Gln) amidotransferase subunit C of Paracoccus denitrificans (strain Pd 1222).